Here is a 353-residue protein sequence, read N- to C-terminus: 4-hydroxy-2-oxovalerate aldolase 2 (353 aa).

The Pyruvate carboxyltransferase domain occupies 14–266 (VRMTDTSLRD…KTGIDFFDIA (253 aa)). 22–23 (RD) serves as a coordination point for substrate. Residue aspartate 23 coordinates Mn(2+). The Proton acceptor role is filled by histidine 26. Serine 176 and histidine 205 together coordinate substrate. Histidine 205 and histidine 207 together coordinate Mn(2+). Substrate is bound at residue tyrosine 296.

Belongs to the 4-hydroxy-2-oxovalerate aldolase family.

The catalysed reaction is (S)-4-hydroxy-2-oxopentanoate = acetaldehyde + pyruvate. This Mycobacterium sp. (strain JLS) protein is 4-hydroxy-2-oxovalerate aldolase 2.